The chain runs to 92 residues: Large ribosomal subunit protein eL31 (92 aa).

Ser2 bears the N-acetylserine mark.

The protein belongs to the eukaryotic ribosomal protein eL31 family. As to quaternary structure, part of the 50S ribosomal subunit.

Binds to the 23S rRNA. Located at the polypeptide exit tunnel on the outside of the subunit. This chain is Large ribosomal subunit protein eL31 (rpl31e), found in Haloarcula marismortui (strain ATCC 43049 / DSM 3752 / JCM 8966 / VKM B-1809) (Halobacterium marismortui).